Consider the following 405-residue polypeptide: Putative aminotransferase AatC (405 aa).

Lys-238 is subject to N6-(pyridoxal phosphate)lysine.

Belongs to the class-I pyridoxal-phosphate-dependent aminotransferase family. As to quaternary structure, homodimer. Pyridoxal 5'-phosphate serves as cofactor.

The protein localises to the cytoplasm. The polypeptide is Putative aminotransferase AatC (aatC) (Rhizobium meliloti (strain 1021) (Ensifer meliloti)).